A 292-amino-acid polypeptide reads, in one-letter code: NIF3-like protein 1 (292 aa).

This sequence belongs to the GTP cyclohydrolase I type 2/NIF3 family.

In Drosophila melanogaster (Fruit fly), this protein is NIF3-like protein 1 (anon-35F/36A).